Consider the following 315-residue polypeptide: GTP cyclohydrolase MptA (315 aa).

The protein belongs to the GTP cyclohydrolase IV family. In terms of assembly, homodimer. It depends on Fe(2+) as a cofactor.

The catalysed reaction is GTP + H2O = 7,8-dihydroneopterin 2',3'-cyclic phosphate + formate + diphosphate + H(+). The protein operates within cofactor biosynthesis; 5,6,7,8-tetrahydromethanopterin biosynthesis. In terms of biological role, converts GTP to 7,8-dihydro-D-neopterin 2',3'-cyclic phosphate, the first intermediate in the biosynthesis of coenzyme methanopterin. The protein is GTP cyclohydrolase MptA of Methanococcus maripaludis (strain C6 / ATCC BAA-1332).